The primary structure comprises 252 residues: Vacuolar-sorting protein dot2 (252 aa).

It belongs to the SNF8 family. As to quaternary structure, component of the endosomal sorting complex required for transport II (ESCRT-II).

Its subcellular location is the cytoplasm. It is found in the nucleus. It localises to the endosome membrane. Functionally, component of the endosomal sorting complex required for transport II (ESCRT-II), which is required for multivesicular body (MVB) formation and sorting of endosomal cargo proteins into MVBs. The MVB pathway mediates delivery of transmembrane proteins into the lumen of the lysosome for degradation. The ESCRT-II complex is probably involved in the recruitment of the ESCRT-III complex. Negatively regulates meiotic spindle pole body maturation via indirect regulation of the pcp1 gene. Required for efficient entry into pre-meiotic S phase. This Schizosaccharomyces pombe (strain 972 / ATCC 24843) (Fission yeast) protein is Vacuolar-sorting protein dot2 (dot2).